Reading from the N-terminus, the 276-residue chain is Putative pyruvate, phosphate dikinase regulatory protein (276 aa).

Residue 152–159 (GISRTSKT) participates in ADP binding.

This sequence belongs to the pyruvate, phosphate/water dikinase regulatory protein family. PDRP subfamily.

The catalysed reaction is N(tele)-phospho-L-histidyl/L-threonyl-[pyruvate, phosphate dikinase] + ADP = N(tele)-phospho-L-histidyl/O-phospho-L-threonyl-[pyruvate, phosphate dikinase] + AMP + H(+). The enzyme catalyses N(tele)-phospho-L-histidyl/O-phospho-L-threonyl-[pyruvate, phosphate dikinase] + phosphate + H(+) = N(tele)-phospho-L-histidyl/L-threonyl-[pyruvate, phosphate dikinase] + diphosphate. Its function is as follows. Bifunctional serine/threonine kinase and phosphorylase involved in the regulation of the pyruvate, phosphate dikinase (PPDK) by catalyzing its phosphorylation/dephosphorylation. This chain is Putative pyruvate, phosphate dikinase regulatory protein, found in Staphylococcus carnosus (strain TM300).